Reading from the N-terminus, the 162-residue chain is Ribonuclease H (162 aa).

Positions 1-141 constitute an RNase H type-1 domain; that stretch reads MKRIEIFTDG…ADALARAGMA (141 aa). Mg(2+)-binding residues include Asp-9, Glu-47, Asp-69, and Asp-133. The tract at residues 139–162 is disordered; it reads GMAPFKKKKGGDTASSEEGSARRR.

It belongs to the RNase H family. As to quaternary structure, monomer. Mg(2+) serves as cofactor.

The protein localises to the cytoplasm. It carries out the reaction Endonucleolytic cleavage to 5'-phosphomonoester.. In terms of biological role, endonuclease that specifically degrades the RNA of RNA-DNA hybrids. The protein is Ribonuclease H of Chelativorans sp. (strain BNC1).